A 209-amino-acid chain; its full sequence is Large ribosomal subunit protein bL9 (209 aa).

Residues 184-209 form a disordered region; it reads SAASEDSDLVETPEDRATEEAEDEQP.

Belongs to the bacterial ribosomal protein bL9 family.

In terms of biological role, binds to the 23S rRNA. The polypeptide is Large ribosomal subunit protein bL9 (Dinoroseobacter shibae (strain DSM 16493 / NCIMB 14021 / DFL 12)).